The following is a 163-amino-acid chain: Crossover junction endodeoxyribonuclease RuvC (163 aa).

Active-site residues include D9, E76, and D148. Mg(2+)-binding residues include D9, E76, and D148.

The protein belongs to the RuvC family. Homodimer which binds Holliday junction (HJ) DNA. The HJ becomes 2-fold symmetrical on binding to RuvC with unstacked arms; it has a different conformation from HJ DNA in complex with RuvA. In the full resolvosome a probable DNA-RuvA(4)-RuvB(12)-RuvC(2) complex forms which resolves the HJ. Mg(2+) is required as a cofactor.

The protein resides in the cytoplasm. The catalysed reaction is Endonucleolytic cleavage at a junction such as a reciprocal single-stranded crossover between two homologous DNA duplexes (Holliday junction).. Its function is as follows. The RuvA-RuvB-RuvC complex processes Holliday junction (HJ) DNA during genetic recombination and DNA repair. Endonuclease that resolves HJ intermediates. Cleaves cruciform DNA by making single-stranded nicks across the HJ at symmetrical positions within the homologous arms, yielding a 5'-phosphate and a 3'-hydroxyl group; requires a central core of homology in the junction. The consensus cleavage sequence is 5'-(A/T)TT(C/G)-3'. Cleavage occurs on the 3'-side of the TT dinucleotide at the point of strand exchange. HJ branch migration catalyzed by RuvA-RuvB allows RuvC to scan DNA until it finds its consensus sequence, where it cleaves and resolves the cruciform DNA. The chain is Crossover junction endodeoxyribonuclease RuvC from Nostoc punctiforme (strain ATCC 29133 / PCC 73102).